A 371-amino-acid polypeptide reads, in one-letter code: 4-hydroxy-3-methylbut-2-en-1-yl diphosphate synthase (flavodoxin) (371 aa).

Residues cysteine 270, cysteine 273, cysteine 305, and glutamate 312 each contribute to the [4Fe-4S] cluster site.

The protein belongs to the IspG family. [4Fe-4S] cluster serves as cofactor.

It carries out the reaction (2E)-4-hydroxy-3-methylbut-2-enyl diphosphate + oxidized [flavodoxin] + H2O + 2 H(+) = 2-C-methyl-D-erythritol 2,4-cyclic diphosphate + reduced [flavodoxin]. It participates in isoprenoid biosynthesis; isopentenyl diphosphate biosynthesis via DXP pathway; isopentenyl diphosphate from 1-deoxy-D-xylulose 5-phosphate: step 5/6. Its function is as follows. Converts 2C-methyl-D-erythritol 2,4-cyclodiphosphate (ME-2,4cPP) into 1-hydroxy-2-methyl-2-(E)-butenyl 4-diphosphate. The protein is 4-hydroxy-3-methylbut-2-en-1-yl diphosphate synthase (flavodoxin) of Shewanella pealeana (strain ATCC 700345 / ANG-SQ1).